Consider the following 66-residue polypeptide: U-limacoditoxin(59)-Dv128 (66 aa).

Residues 1–20 (MRHLLVLLLICLSVIAMAQA) form the signal peptide. Positions 21 to 66 (TFGGGLGGAVGGRRRRDIGGGLGGAVGGRRRRDIGGGLGGAVGGKS) are 3 X 16 AA tandem repeats of [FI]-G-G-G-L-G-G-A-V-G-G-R-R-R-R-D. 2 repeat units span residues 22–37 (FGGGLGGAVGGRRRRD) and 38–53 (IGGGLGGAVGGRRRRD). Position 31 is a glycine amide (glycine 31). Residues 33–37 (RRRRD) constitute a propeptide that is removed on maturation. Position 47 is a glycine amide (glycine 47). A propeptide spanning residues 49–53 (RRRRD) is cleaved from the precursor. The 3; half-length repeat unit spans residues 54–64 (IGGGLGGAVGG).

It belongs to the limacoditoxin-59 family. Expressed by the venom secretory cell of the spine. The spine is a cuticular structure containing a single large nucleated venom-secreting cell at its base. It is an independent unit capable of producing, storing and injecting venom. On the back of D.vulnerans caterpillars, spines are grouped together by 50 to 100 to form scoli, of which there are eight in D.vulnerans.

Its subcellular location is the secreted. Its function is as follows. Probable toxin. The sequence is that of U-limacoditoxin(59)-Dv128 from Doratifera vulnerans (Mottled cup moth).